A 4540-amino-acid chain; its full sequence is Dynein heavy chain, cytoplasmic (4540 aa).

The stem stretch occupies residues 1-1796; the sequence is MEESETQLNV…LIQMGNAQFH (1796 aa). 6 coiled-coil regions span residues 440-482, 698-722, 794-827, 975-995, 1169-1251, and 1295-1311; these read EHIK…NVQQ, RVNY…KTKV, VKKF…AMKT, QQLI…MEQY, RSKK…LKMD, and QNKK…KQLN. 4 AAA regions span residues 1797–2018, 2091–2348, 2457–2705, and 2796–3056; these read YGFE…VLNS, KELA…FTRI, EIDP…WKYA, and QFNE…AKRF. Residues 1835–1842, 2129–2136, 2496–2503, and 2834–2841 contribute to the ATP site; these read GPAGTGKT, GPCGCGKS, GPPGSGKT, and GSSGVGKT. 4 coiled-coil regions span residues 3076–3182, 3289–3367, 3653–3688, and 3820–3851; these read NEKK…NAKQ, QLKY…RSQA, EDEK…VMNT, and QQLK…RWLN. The tract at residues 3076–3367 is stalk; sequence NEKKSQLEDQ…VQEKVTRSQA (292 aa). The disordered stretch occupies residues 3140-3159; it reads KKKEDSTRLSSDAEKKAKEM. Residues 3444 to 3673 are AAA 5; it reads LSRPSDRLNW…LKKEAAVIVQ (230 aa). Residues 3908–4123 form an AAA 6 region; that stretch reads ARKLINQILG…QRCSLDLIDE (216 aa). Coiled-coil stretches lie at residues 4238-4259 and 4313-4342; these read QKLI…TQIE and RFLD…LAQG.

Belongs to the dynein heavy chain family. As to quaternary structure, consists of at least two heavy chains and a number of intermediate and light chains.

It is found in the cytoplasm. Its subcellular location is the cytoskeleton. Functionally, cytoplasmic dynein acts as a motor for the intracellular retrograde motility of vesicles and organelles along microtubules. Dynein has ATPase activity; the force-producing power stroke is thought to occur on release of ADP. This is Dynein heavy chain, cytoplasmic (DHC-8) from Paramecium tetraurelia.